The primary structure comprises 524 residues: Hydroxysteroid dehydrogenase-like protein 2 (524 aa).

NADP(+) contacts are provided by residues 17–23, Lys42, and Asp74; that span reads GASRGIG. Lys42 carries the N6-(2-hydroxyisobutyryl)lysine modification. N6-acetyllysine is present on Lys116. The active-site Proton acceptor is the Tyr168. Lys172 serves as a coordination point for NADP(+). Residues 283–300 show a composition bias toward basic and acidic residues; the sequence is EEKESYDPVPEVKEEKLQ. Residues 283 to 410 form a disordered region; it reads EEKESYDPVP…PLLQSVLPPK (128 aa). Over residues 301-391 the composition is skewed to low complexity; sequence LQEQPQLQEQ…QQQPQQRPQQ (91 aa). The 108-residue stretch at 414–521 folds into the SCP2 domain; it reads GAVEETFRIV…KLEKLMTHMN (108 aa). At Lys424 the chain carries N6-succinyllysine.

This sequence belongs to the short-chain dehydrogenases/reductases (SDR) family.

It localises to the peroxisome. The protein localises to the mitochondrion. In terms of biological role, has apparently no steroid dehydrogenase activity. Controls bile acid (BA) and lipid metabolism in response to nutritional cues. This Rattus norvegicus (Rat) protein is Hydroxysteroid dehydrogenase-like protein 2 (Hsdl2).